A 171-amino-acid polypeptide reads, in one-letter code: ATP synthase subunit b (171 aa).

Residues 14–34 (LGDMLFIGISFIVLMALISVV) form a helical membrane-spanning segment. The span at 56–97 (SAQKSRQEASDLADQRRDALSHSRAEASEIVADAKKSGEKQR) shows a compositional bias: basic and acidic residues. Positions 56-104 (SAQKSRQEASDLADQRRDALSHSRAEASEIVADAKKSGEKQRSSIVADA) are disordered.

This sequence belongs to the ATPase B chain family. F-type ATPases have 2 components, F(1) - the catalytic core - and F(0) - the membrane proton channel. F(1) has five subunits: alpha(3), beta(3), gamma(1), delta(1), epsilon(1). F(0) has three main subunits: a(1), b(2) and c(10-14). The alpha and beta chains form an alternating ring which encloses part of the gamma chain. F(1) is attached to F(0) by a central stalk formed by the gamma and epsilon chains, while a peripheral stalk is formed by the delta and b chains.

The protein resides in the cell membrane. Its function is as follows. F(1)F(0) ATP synthase produces ATP from ADP in the presence of a proton or sodium gradient. F-type ATPases consist of two structural domains, F(1) containing the extramembraneous catalytic core and F(0) containing the membrane proton channel, linked together by a central stalk and a peripheral stalk. During catalysis, ATP synthesis in the catalytic domain of F(1) is coupled via a rotary mechanism of the central stalk subunits to proton translocation. Component of the F(0) channel, it forms part of the peripheral stalk, linking F(1) to F(0). This Lactiplantibacillus plantarum (strain ATCC BAA-793 / NCIMB 8826 / WCFS1) (Lactobacillus plantarum) protein is ATP synthase subunit b.